A 338-amino-acid polypeptide reads, in one-letter code: Ferredoxin--NADP reductase (338 aa).

Residues Asp-36, Gln-44, Tyr-49, Val-89, Phe-123, Asp-290, and Thr-331 each contribute to the FAD site.

Belongs to the ferredoxin--NADP reductase type 2 family. Homodimer. The cofactor is FAD.

It carries out the reaction 2 reduced [2Fe-2S]-[ferredoxin] + NADP(+) + H(+) = 2 oxidized [2Fe-2S]-[ferredoxin] + NADPH. In Anaplasma phagocytophilum (strain HZ), this protein is Ferredoxin--NADP reductase.